Consider the following 154-residue polypeptide: Endoribonuclease YbeY (154 aa).

Positions 114, 118, and 124 each coordinate Zn(2+).

Belongs to the endoribonuclease YbeY family. Zn(2+) is required as a cofactor.

The protein localises to the cytoplasm. Its function is as follows. Single strand-specific metallo-endoribonuclease involved in late-stage 70S ribosome quality control and in maturation of the 3' terminus of the 16S rRNA. This Haemophilus influenzae (strain ATCC 51907 / DSM 11121 / KW20 / Rd) protein is Endoribonuclease YbeY.